The following is a 354-amino-acid chain: MDGNKDDASRCLRIAEDAIVSGDKERALKFINMAKRLNPSLSVDELVAACDNLDSVSRNSSVSEKLKTMDGDDDKLETGKMKYTEENVDLVRNIIRNNDYYAILGLEKNCSVDEIRKAYRKLSLKVHPDKNKAPGSEEAFKKVSKAFTCLSDGNSRRQFDQVGIVDEFDHVQRRNRRPRRRYNTRNDFFDDEFDPEEIFRTVFGQQREVFRASHAYRTRQPRNQFREEEINVAGPSCLTIIQILPFFLLLLLAYLPFSEPDYSLHKNQSYQIPKTTQNTEISFYVRSASAFDEKFPLSSSARANLEGNVIKEYKHFLFQSCRIELQKRRWNKKIPTPHCIELQDRGFVDRHIPI.

Residues 99–163 form the J domain; the sequence is DYYAILGLEK…NSRRQFDQVG (65 aa). Residues 237–257 traverse the membrane as a helical segment; the sequence is CLTIIQILPFFLLLLLAYLPF.

The protein belongs to the DnaJ family. C/III subfamily.

The protein localises to the membrane. Functionally, plays a continuous role in plant development probably in the structural organization of compartments. The sequence is that of Chaperone protein dnaJ 49 (ATJ49) from Arabidopsis thaliana (Mouse-ear cress).